The primary structure comprises 563 residues: Src substrate protein p85 (563 aa).

6 Cortactin repeats span residues 89–125 (ASHGYGGKFGVEQDRMDKSAVGHEYQSKLSKHCSQVD), 126–162 (SVKGFGGKFGVQTDRVDQSAVGFEYQGKTEKHASQKD), 163–199 (YSSGFGGKYGVQADRVDKSAVGFDYQGKTEKHESQKD), 200–236 (YSKGFGGKYGVDKDKVDKSAVGFEYQGKTEKHESQKD), 237–273 (YVKGFGGKFGVQTDRQDKCALGWDHQEKVQLHESQKD), and 274–310 (YKSGFGGKFGVQTERQDPSAVGFDYKEKLAKHESQQD). The stretch at 311–333 (YSKGFGGKYGVQKDRMDKNAATF) is one Cortactin 7; truncated repeat. The segment at 331 to 477 (ATFEDIEKPT…EAVSQREAEY (147 aa)) is disordered. A coiled-coil region spans residues 349-410 (VERVANKTSS…EEQAKAKKQT (62 aa)). Over residues 366–405 (LAKEKEQEDRRKAEAERAQRMAREKQEQEEARRKLEEQAK) the composition is skewed to basic and acidic residues. Residues 505-563 (ELGITAIALYDYQAAGDDEISFDPDDIITNIEMIDDGWWRGVCKGRYGLFPANYVELRQ) enclose the SH3 domain.

Post-translationally, acetylated. In normal cells, appears to be phosphorylated on serine and threonine; in cells expressing activated forms of pp60-src, they become heavily phosphorylated on tyrosine in vitro. Tyrosine phosphorylation in transformed cells may contribute to cellular growth regulation and transformation.

The protein resides in the cytoplasm. The protein localises to the cytoskeleton. It is found in the cell projection. It localises to the lamellipodium. Its subcellular location is the ruffle. The protein resides in the dendrite. The protein localises to the cell membrane. It is found in the podosome. It localises to the cell junction. Its subcellular location is the focal adhesion. The protein resides in the membrane. The protein localises to the clathrin-coated pit. It is found in the dendritic spine. It localises to the cell cortex. Its subcellular location is the endoplasmic reticulum. In terms of biological role, contributes to the organization of the actin cytoskeleton and cell shape. Plays a role in the formation of lamellipodia and in cell migration. Plays a role in the regulation of neuron morphology, axon growth and formation of neuronal growth cones, and may play a role in the regulation of neuronal spine density. Plays a role in focal adhesion assembly and turnover. Plays a role in intracellular protein transport and endocytosis, and in modulating the levels of potassium channels present at the cell membrane. Plays a role in endocytosis via clathrin-coated pits. This Gallus gallus (Chicken) protein is Src substrate protein p85 (CTTN1).